Reading from the N-terminus, the 260-residue chain is Indole-3-glycerol phosphate synthase (260 aa).

This sequence belongs to the TrpC family.

The enzyme catalyses 1-(2-carboxyphenylamino)-1-deoxy-D-ribulose 5-phosphate + H(+) = (1S,2R)-1-C-(indol-3-yl)glycerol 3-phosphate + CO2 + H2O. Its pathway is amino-acid biosynthesis; L-tryptophan biosynthesis; L-tryptophan from chorismate: step 4/5. The sequence is that of Indole-3-glycerol phosphate synthase from Thermoanaerobacter pseudethanolicus (strain ATCC 33223 / 39E) (Clostridium thermohydrosulfuricum).